The sequence spans 637 residues: DNA mismatch repair protein MutL (637 aa).

This sequence belongs to the DNA mismatch repair MutL/HexB family.

Functionally, this protein is involved in the repair of mismatches in DNA. It is required for dam-dependent methyl-directed DNA mismatch repair. May act as a 'molecular matchmaker', a protein that promotes the formation of a stable complex between two or more DNA-binding proteins in an ATP-dependent manner without itself being part of a final effector complex. This is DNA mismatch repair protein MutL from Actinobacillus succinogenes (strain ATCC 55618 / DSM 22257 / CCUG 43843 / 130Z).